The primary structure comprises 328 residues: Gonadotropin-releasing hormone receptor (328 aa).

At 1–38 (MANSDSPEQNENHCSSINSSIPLTPGSLPTLTLSGKIR) the chain is on the extracellular side. A glycan (N-linked (GlcNAc...) asparagine) is linked at Asn18. Residues 39 to 58 (VTVTFFLFLLSTIFNTSFLL) traverse the membrane as a helical segment. Residues 59–77 (KLQNWTQRKEKRKKLSRMK) are Cytoplasmic-facing. A helical transmembrane segment spans residues 78–97 (LLLKHLTLANLLETLIVMPL). Topologically, residues 98–115 (DGMWNITVQWYAGELLCK) are extracellular. An N-linked (GlcNAc...) asparagine glycan is attached at Asn102. An intrachain disulfide couples Cys114 to Cys196. A helical membrane pass occupies residues 116–137 (VLSYLKLFSMYAPAFMMVVISL). Residues 138–164 (DRSLAITKPLAVKSNSKLGQFMIGLAW) lie on the Cytoplasmic side of the membrane. Residues 165-184 (LLSSIFAGPQLYIFGMIHLA) traverse the membrane as a helical segment. The Extracellular portion of the chain corresponds to 185–212 (DDSGQTEGFSQCVTHCSFPQWWHQAFYN). The helical transmembrane segment at 213 to 232 (FFTFSCLFIIPLLIMVICNA) threads the bilayer. Topologically, residues 233–281 (KIIFTLTRVLHQDPHKLQLNQSKNNIPRARLRTLKMTVAFATSFTVCWT) are cytoplasmic. Residues 282 to 300 (PYYVLGIWYWFDPDMVNRV) traverse the membrane as a helical segment. The Extracellular segment spans residues 301-306 (SDPVNH). A helical transmembrane segment spans residues 307-326 (FFFLFAFLNPCFNPLIYGYF). At 327–328 (SL) the chain is on the cytoplasmic side.

The protein belongs to the G-protein coupled receptor 1 family.

It localises to the cell membrane. Functionally, receptor for gonadotropin releasing hormone (GnRH) that mediates the action of GnRH to stimulate the secretion of the gonadotropic hormones luteinizing hormone (LH) and follicle-stimulating hormone (FSH). This receptor mediates its action by association with G-proteins that activate a phosphatidylinositol-calcium second messenger system. The polypeptide is Gonadotropin-releasing hormone receptor (GNRHR) (Bos mutus grunniens (Wild yak)).